The following is an 86-amino-acid chain: U15-lycotoxin-Ls1a (86 aa).

The signal sequence occupies residues 1-20 (MNSKIFAVLFLLAFLSCVLS). The WAP domain maps to 21–66 (DQYCPKSSITACKKMNIRNDCCKDDDCTGGSWCCATPCGNFCKYPT). 5 disulfide bridges follow: Cys-24–Cys-54, Cys-32–Cys-58, Cys-41–Cys-53, Cys-42–Cys-80, and Cys-47–Cys-62.

It belongs to the venom protein 11 family. 01 (wap-1) subfamily. Post-translationally, contains 5 disulfide bonds. Expressed by the venom gland.

The protein resides in the secreted. Its function is as follows. Has antibacterial activity. The chain is U15-lycotoxin-Ls1a from Lycosa singoriensis (Wolf spider).